The sequence spans 399 residues: La protein 2 (399 aa).

The region spanning 3–106 (SSFNEETAKK…GRGTKLSKPE (104 aa)) is the HTH La-type RNA-binding domain. The region spanning 115–192 (RTLAASPFEY…ADLVLIPKSD (78 aa)) is the RRM domain. The 131-residue stretch at 269–399 (SLCKDNTDQL…QPTKKARKEP (131 aa)) folds into the xRRM domain. The interval 367-399 (AELEGGKEGHKKEKGKDECFENVQPTKKARKEP) is disordered. Basic and acidic residues predominate over residues 370 to 385 (EGGKEGHKKEKGKDEC).

Expressed ubiquitously (at protein level).

It localises to the nucleus. Its subcellular location is the nucleoplasm. The protein resides in the nucleolus. Functionally, binds to the 3' poly(U) terminus of nascent RNA polymerase III transcripts, protecting them from exonuclease digestion and facilitating their folding and maturation. The chain is La protein 2 (LA2) from Arabidopsis thaliana (Mouse-ear cress).